The sequence spans 176 residues: Ribosome maturation factor RimM (176 aa).

A PRC barrel domain is found at 97 to 176 (EDEFYWRDLI…QILVDWDPDF (80 aa)).

It belongs to the RimM family. As to quaternary structure, binds ribosomal protein uS19.

It localises to the cytoplasm. Its function is as follows. An accessory protein needed during the final step in the assembly of 30S ribosomal subunit, possibly for assembly of the head region. Essential for efficient processing of 16S rRNA. May be needed both before and after RbfA during the maturation of 16S rRNA. It has affinity for free ribosomal 30S subunits but not for 70S ribosomes. This Shewanella loihica (strain ATCC BAA-1088 / PV-4) protein is Ribosome maturation factor RimM.